Here is a 216-residue protein sequence, read N- to C-terminus: Transmembrane protein 125 (216 aa).

A run of 4 helical transmembrane segments spans residues 32–52 (LLCF…GVAL), 65–85 (LAVG…QLMS), 111–131 (AVVV…LAGL), and 144–164 (MLSV…GLLL).

Its subcellular location is the membrane. In Mus musculus (Mouse), this protein is Transmembrane protein 125 (Tmem125).